We begin with the raw amino-acid sequence, 308 residues long: Protein translocase subunit SecF (308 aa).

A run of 6 helical transmembrane segments spans residues Ser28–Ile48, Ile140–Val160, Trp164–Phe184, Leu194–Ile214, Ile246–Ala266, and Val272–Ile292.

It belongs to the SecD/SecF family. SecF subfamily. Forms a complex with SecD. Part of the essential Sec protein translocation apparatus which comprises SecA, SecYEG and auxiliary proteins SecDF-YajC and YidC.

It is found in the cell inner membrane. Its function is as follows. Part of the Sec protein translocase complex. Interacts with the SecYEG preprotein conducting channel. SecDF uses the proton motive force (PMF) to complete protein translocation after the ATP-dependent function of SecA. The chain is Protein translocase subunit SecF from Rickettsia felis (strain ATCC VR-1525 / URRWXCal2) (Rickettsia azadi).